The primary structure comprises 318 residues: Methionyl-tRNA formyltransferase (318 aa).

112–115 (SILP) contacts (6S)-5,6,7,8-tetrahydrofolate.

Belongs to the Fmt family.

The catalysed reaction is L-methionyl-tRNA(fMet) + (6R)-10-formyltetrahydrofolate = N-formyl-L-methionyl-tRNA(fMet) + (6S)-5,6,7,8-tetrahydrofolate + H(+). Its function is as follows. Attaches a formyl group to the free amino group of methionyl-tRNA(fMet). The formyl group appears to play a dual role in the initiator identity of N-formylmethionyl-tRNA by promoting its recognition by IF2 and preventing the misappropriation of this tRNA by the elongation apparatus. The sequence is that of Methionyl-tRNA formyltransferase from Shewanella baltica (strain OS155 / ATCC BAA-1091).